A 242-amino-acid polypeptide reads, in one-letter code: Carbendazim hydrolyzing esterase (242 aa).

Serine 77 (acyl-ester intermediate) is an active-site residue.

The protein belongs to the AB hydrolase superfamily.

It is found in the secreted. It catalyses the reaction carbendazim + H2O = 2-aminobenzimidazole + methanol + CO2. The catalysed reaction is carbendazim + H2O = N-(1H-1,3-benzodiazol-2-yl)carbamate + methanol + H(+). It carries out the reaction N-(1H-1,3-benzodiazol-2-yl)carbamate + H(+) = 2-aminobenzimidazole + CO2. Catalyzes the hydrolysis of the fungicide carbendazim (methyl-1H-benzimidazol-2-ylcarbamate or MBC) to 2-aminobenzimidazole (2-AB). Following hydrolysis of the carbamate ester, the carbamate decarboxylates spontaneously. Can hydrolyze model carboxylesters such as methyl salicylate, alpha-naphthyl acetate and p-nitrophenyl acetate. In addition, shows substantial hydrolytic activity in vitro against widespread pollutants with carboxylester, carbamate and amide linkages, such as dimethyl phthalate, propanil and chlorpropham. This chain is Carbendazim hydrolyzing esterase, found in Nocardioides sp. (strain SG-4G).